A 523-amino-acid chain; its full sequence is 2-isopropylmalate synthase (523 aa).

Residues 5–267 (VIIFDTTLRD…ETGINAKEIH (263 aa)) form the Pyruvate carboxyltransferase domain. Mn(2+) contacts are provided by aspartate 14, histidine 202, histidine 204, and asparagine 238. Residues 392–523 (QLKQLVVHSD…QQKARSLGGV (132 aa)) form a regulatory domain region.

It belongs to the alpha-IPM synthase/homocitrate synthase family. LeuA type 1 subfamily. In terms of assembly, homodimer. Mn(2+) is required as a cofactor.

Its subcellular location is the cytoplasm. The enzyme catalyses 3-methyl-2-oxobutanoate + acetyl-CoA + H2O = (2S)-2-isopropylmalate + CoA + H(+). It functions in the pathway amino-acid biosynthesis; L-leucine biosynthesis; L-leucine from 3-methyl-2-oxobutanoate: step 1/4. Catalyzes the condensation of the acetyl group of acetyl-CoA with 3-methyl-2-oxobutanoate (2-ketoisovalerate) to form 3-carboxy-3-hydroxy-4-methylpentanoate (2-isopropylmalate). This is 2-isopropylmalate synthase from Shewanella woodyi (strain ATCC 51908 / MS32).